The chain runs to 436 residues: Proline transporter 3 (436 aa).

A run of 11 helical transmembrane segments spans residues 29 to 49 (SWFQ…VLGY), 52 to 72 (TVMV…ATAI), 118 to 138 (LFMI…AVYV), 151 to 171 (FIAI…HLSA), 172 to 192 (LGIW…VAIV), 216 to 236 (LFTI…GMLP), 254 to 274 (LYFQ…IGYW), 296 to 316 (ALAN…FASP), 345 to 365 (GGYI…GDFM), 366 to 386 (SLTG…HMYY), and 405 to 425 (VVFF…LIAL).

The protein belongs to the amino acid/polyamine transporter 2 family. Amino acid/auxin permease (AAAP) (TC 2.A.18.3) subfamily. In terms of tissue distribution, expressed in epidermal cells of leaves, sepals and petals.

Its subcellular location is the cell membrane. Functionally, proline transporter that mediates proline and glycine betaine transport. When expressed in a heterologous system (yeast), imports L-proline, glycine betaine and GABA across the plasma membrane. The protein is Proline transporter 3 (PROT3) of Arabidopsis thaliana (Mouse-ear cress).